Reading from the N-terminus, the 90-residue chain is Mitochondrial import inner membrane translocase subunit Tim10-B (90 aa).

Positions Cys-29–Cys-54 match the Twin CX3C motif motif. Cystine bridges form between Cys-29/Cys-54 and Cys-33/Cys-50.

It belongs to the small Tim family. In terms of assembly, heterohexamer; composed of 3 copies of TIMM9 and 3 copies of TIMM10/TIM10A, named soluble 70 kDa complex. The complex forms a 6-bladed alpha-propeller structure and associates with the TIMM22 component of the TIM22 complex. Interacts with multi-pass transmembrane proteins in transit.

Its subcellular location is the mitochondrion inner membrane. In terms of biological role, mitochondrial intermembrane chaperone that participates in the import and insertion of multi-pass transmembrane proteins into the mitochondrial inner membrane. May also be required for the transfer of beta-barrel precursors from the TOM complex to the sorting and assembly machinery (SAM complex) of the outer membrane. Acts as a chaperone-like protein that protects the hydrophobic precursors from aggregation and guide them through the mitochondrial intermembrane space. The protein is Mitochondrial import inner membrane translocase subunit Tim10-B (timm10-b) of Xenopus laevis (African clawed frog).